The chain runs to 251 residues: Aliphatic sulfonates import ATP-binding protein SsuB (251 aa).

An ABC transporter domain is found at 3–231; it reads VSIDGVSKYF…PRSKTSESFQ (229 aa). Position 39 to 46 (39 to 46) interacts with ATP; it reads GPSGCGKS.

This sequence belongs to the ABC transporter superfamily. Aliphatic sulfonates importer (TC 3.A.1.17.2) family. As to quaternary structure, the complex is composed of two ATP-binding proteins (SsuB), two transmembrane proteins (SsuC) and a solute-binding protein (SsuA).

The protein resides in the cell membrane. It carries out the reaction ATP + H2O + aliphatic sulfonate-[sulfonate-binding protein]Side 1 = ADP + phosphate + aliphatic sulfonateSide 2 + [sulfonate-binding protein]Side 1.. In terms of biological role, part of the ABC transporter complex SsuABC involved in aliphatic sulfonates import. Responsible for energy coupling to the transport system. This is Aliphatic sulfonates import ATP-binding protein SsuB from Bacillus cereus (strain ATCC 10987 / NRS 248).